A 693-amino-acid polypeptide reads, in one-letter code: UvrABC system protein B (693 aa).

Residues Glu-35 to Met-188 form the Helicase ATP-binding domain. ATP is bound at residue Gly-48–Ser-55. The short motif at Tyr-101–Val-124 is the Beta-hairpin element. A Helicase C-terminal domain is found at Gln-438–Thr-604. The 36-residue stretch at Val-648 to Glu-683 folds into the UVR domain.

It belongs to the UvrB family. As to quaternary structure, forms a heterotetramer with UvrA during the search for lesions. Interacts with UvrC in an incision complex.

The protein resides in the cytoplasm. Functionally, the UvrABC repair system catalyzes the recognition and processing of DNA lesions. A damage recognition complex composed of 2 UvrA and 2 UvrB subunits scans DNA for abnormalities. Upon binding of the UvrA(2)B(2) complex to a putative damaged site, the DNA wraps around one UvrB monomer. DNA wrap is dependent on ATP binding by UvrB and probably causes local melting of the DNA helix, facilitating insertion of UvrB beta-hairpin between the DNA strands. Then UvrB probes one DNA strand for the presence of a lesion. If a lesion is found the UvrA subunits dissociate and the UvrB-DNA preincision complex is formed. This complex is subsequently bound by UvrC and the second UvrB is released. If no lesion is found, the DNA wraps around the other UvrB subunit that will check the other stand for damage. This is UvrABC system protein B from Arthrobacter sp. (strain FB24).